Here is a 322-residue protein sequence, read N- to C-terminus: Replication factor C small subunit (322 aa).

An ATP-binding site is contributed by 50 to 57 (GPAGTGKT).

The protein belongs to the activator 1 small subunits family. RfcS subfamily. Heteromultimer composed of small subunits (RfcS) and large subunits (RfcL).

Its function is as follows. Part of the RFC clamp loader complex which loads the PCNA sliding clamp onto DNA. This Halobacterium salinarum (strain ATCC 700922 / JCM 11081 / NRC-1) (Halobacterium halobium) protein is Replication factor C small subunit.